The primary structure comprises 257 residues: Deoxyribose-phosphate aldolase (257 aa).

Catalysis depends on D102, which acts as the Proton donor/acceptor. The active-site Schiff-base intermediate with acetaldehyde is the K166. Residue K198 is the Proton donor/acceptor of the active site.

It belongs to the DeoC/FbaB aldolase family. DeoC type 2 subfamily.

Its subcellular location is the cytoplasm. It catalyses the reaction 2-deoxy-D-ribose 5-phosphate = D-glyceraldehyde 3-phosphate + acetaldehyde. Its pathway is carbohydrate degradation; 2-deoxy-D-ribose 1-phosphate degradation; D-glyceraldehyde 3-phosphate and acetaldehyde from 2-deoxy-alpha-D-ribose 1-phosphate: step 2/2. In terms of biological role, catalyzes a reversible aldol reaction between acetaldehyde and D-glyceraldehyde 3-phosphate to generate 2-deoxy-D-ribose 5-phosphate. The sequence is that of Deoxyribose-phosphate aldolase from Shewanella amazonensis (strain ATCC BAA-1098 / SB2B).